Consider the following 635-residue polypeptide: Chaperone protein HtpG (635 aa).

Residues 1–343 (MTAEATVETR…SNDLSLNVSR (343 aa)) form an a; substrate-binding region. Residues 344 to 560 (EILQQDPNID…EHDMGAQMRR (217 aa)) are b. The segment at 561–635 (LLEAAGQAVP…LNKLLLELSN (75 aa)) is c.

It belongs to the heat shock protein 90 family. In terms of assembly, homodimer.

The protein resides in the cytoplasm. In terms of biological role, molecular chaperone. Has ATPase activity. The protein is Chaperone protein HtpG of Saccharophagus degradans (strain 2-40 / ATCC 43961 / DSM 17024).